Reading from the N-terminus, the 130-residue chain is ATP synthase epsilon chain (130 aa).

This sequence belongs to the ATPase epsilon chain family. F-type ATPases have 2 components, CF(1) - the catalytic core - and CF(0) - the membrane proton channel. CF(1) has five subunits: alpha(3), beta(3), gamma(1), delta(1), epsilon(1). CF(0) has three main subunits: a, b and c.

It localises to the cell inner membrane. In terms of biological role, produces ATP from ADP in the presence of a proton gradient across the membrane. This Campylobacter hominis (strain ATCC BAA-381 / DSM 21671 / CCUG 45161 / LMG 19568 / NCTC 13146 / CH001A) protein is ATP synthase epsilon chain.